Consider the following 438-residue polypeptide: Thymidine phosphorylase (438 aa).

Belongs to the thymidine/pyrimidine-nucleoside phosphorylase family. In terms of assembly, homodimer.

It catalyses the reaction thymidine + phosphate = 2-deoxy-alpha-D-ribose 1-phosphate + thymine. Its pathway is pyrimidine metabolism; dTMP biosynthesis via salvage pathway; dTMP from thymine: step 1/2. Its function is as follows. The enzymes which catalyze the reversible phosphorolysis of pyrimidine nucleosides are involved in the degradation of these compounds and in their utilization as carbon and energy sources, or in the rescue of pyrimidine bases for nucleotide synthesis. This chain is Thymidine phosphorylase, found in Sinorhizobium fredii (strain NBRC 101917 / NGR234).